The sequence spans 440 residues: Thymidine phosphorylase (440 aa).

This sequence belongs to the thymidine/pyrimidine-nucleoside phosphorylase family. As to quaternary structure, homodimer.

The catalysed reaction is thymidine + phosphate = 2-deoxy-alpha-D-ribose 1-phosphate + thymine. It functions in the pathway pyrimidine metabolism; dTMP biosynthesis via salvage pathway; dTMP from thymine: step 1/2. Its function is as follows. The enzymes which catalyze the reversible phosphorolysis of pyrimidine nucleosides are involved in the degradation of these compounds and in their utilization as carbon and energy sources, or in the rescue of pyrimidine bases for nucleotide synthesis. The chain is Thymidine phosphorylase from Enterobacter sp. (strain 638).